The primary structure comprises 232 residues: Uracil-DNA glycosylase (232 aa).

D66 functions as the Proton acceptor in the catalytic mechanism.

This sequence belongs to the uracil-DNA glycosylase (UDG) superfamily. UNG family.

It localises to the cytoplasm. The catalysed reaction is Hydrolyzes single-stranded DNA or mismatched double-stranded DNA and polynucleotides, releasing free uracil.. In terms of biological role, excises uracil residues from the DNA which can arise as a result of misincorporation of dUMP residues by DNA polymerase or due to deamination of cytosine. This Lactobacillus helveticus (strain DPC 4571) protein is Uracil-DNA glycosylase.